A 400-amino-acid chain; its full sequence is tRNA-specific 2-thiouridylase MnmA (400 aa).

Residues 19–26 (AMSGGVDS) and Leu45 contribute to the ATP site. Cys113 functions as the Nucleophile in the catalytic mechanism. A disulfide bridge links Cys113 with Cys210. ATP is bound at residue Gly137. An interaction with tRNA region spans residues 160–162 (RDQ). Cys210 functions as the Cysteine persulfide intermediate in the catalytic mechanism.

The protein belongs to the MnmA/TRMU family.

It localises to the cytoplasm. The enzyme catalyses S-sulfanyl-L-cysteinyl-[protein] + uridine(34) in tRNA + AH2 + ATP = 2-thiouridine(34) in tRNA + L-cysteinyl-[protein] + A + AMP + diphosphate + H(+). Its function is as follows. Catalyzes the 2-thiolation of uridine at the wobble position (U34) of tRNA, leading to the formation of s(2)U34. The chain is tRNA-specific 2-thiouridylase MnmA from Rhodopseudomonas palustris (strain BisB18).